A 302-amino-acid polypeptide reads, in one-letter code: UDP-N-acetylenolpyruvoylglucosamine reductase (302 aa).

An FAD-binding PCMH-type domain is found at 31 to 196 (KIGGPADVLA…LRAWISLERG (166 aa)). R175 is a catalytic residue. S225 serves as the catalytic Proton donor. The active site involves E295.

It belongs to the MurB family. FAD serves as cofactor.

Its subcellular location is the cytoplasm. The catalysed reaction is UDP-N-acetyl-alpha-D-muramate + NADP(+) = UDP-N-acetyl-3-O-(1-carboxyvinyl)-alpha-D-glucosamine + NADPH + H(+). It participates in cell wall biogenesis; peptidoglycan biosynthesis. In terms of biological role, cell wall formation. This chain is UDP-N-acetylenolpyruvoylglucosamine reductase, found in Caldanaerobacter subterraneus subsp. tengcongensis (strain DSM 15242 / JCM 11007 / NBRC 100824 / MB4) (Thermoanaerobacter tengcongensis).